A 419-amino-acid polypeptide reads, in one-letter code: Serine hydroxymethyltransferase (419 aa).

Residues L119 and 123-125 (GHL) each bind (6S)-5,6,7,8-tetrahydrofolate. K228 carries the N6-(pyridoxal phosphate)lysine modification.

It belongs to the SHMT family. Homodimer. It depends on pyridoxal 5'-phosphate as a cofactor.

The protein resides in the cytoplasm. It catalyses the reaction (6R)-5,10-methylene-5,6,7,8-tetrahydrofolate + glycine + H2O = (6S)-5,6,7,8-tetrahydrofolate + L-serine. It functions in the pathway one-carbon metabolism; tetrahydrofolate interconversion. It participates in amino-acid biosynthesis; glycine biosynthesis; glycine from L-serine: step 1/1. Catalyzes the reversible interconversion of serine and glycine with tetrahydrofolate (THF) serving as the one-carbon carrier. This reaction serves as the major source of one-carbon groups required for the biosynthesis of purines, thymidylate, methionine, and other important biomolecules. Also exhibits THF-independent aldolase activity toward beta-hydroxyamino acids, producing glycine and aldehydes, via a retro-aldol mechanism. The sequence is that of Serine hydroxymethyltransferase from Desulfosudis oleivorans (strain DSM 6200 / JCM 39069 / Hxd3) (Desulfococcus oleovorans).